Here is a 419-residue protein sequence, read N- to C-terminus: MEMIQAVRGTRDILPQEVRLWQQVEASAREILGRANYQEIRTPILELTELFARSIGSATDVVGKEMYSFSTRGEQEVSLRPENTAGVVRAYIQHGLQVAGDVQRLWYCGPMFRYERPQAGRQRQFHQLGVELLGSRDPRADAEVIALAWDLLRAVGAENLTLRLNSLGDPQDRRAYRQALVDYLTPLKEELDLDSQERLVRNPLRILDSKDPHTRTIAEQGPKLPDYLSADSRAFFEQVQAHLQALDIPYELDPYLVRGLDYYTHTAFEIVSPELGSQSTVCGGGRYDGLVEELGGPPTPAVGWAIGLERLVLLLQKKQQEIPPTSVEVYVISRGAKAEAQSLQIAQALRQAGFCTELDLSGSAFSKQFKRASRSGATWAVALGDAEAAAGEVQLKHLPTGQQQTLLQADLVKYLVSQR.

Belongs to the class-II aminoacyl-tRNA synthetase family. As to quaternary structure, homodimer.

Its subcellular location is the cytoplasm. The catalysed reaction is tRNA(His) + L-histidine + ATP = L-histidyl-tRNA(His) + AMP + diphosphate + H(+). The protein is Histidine--tRNA ligase of Synechococcus sp. (strain JA-3-3Ab) (Cyanobacteria bacterium Yellowstone A-Prime).